A 261-amino-acid polypeptide reads, in one-letter code: Lytic polysaccharide monooxygenase-like protein X325 (261 aa).

The signal sequence occupies residues 1 to 17 (MQLSALALATLLATANA). Cu(2+) is bound by residues histidine 18, histidine 64, and aspartate 133. 2 disulfide bridges follow: cysteine 39–cysteine 139 and cysteine 108–cysteine 155. Residues asparagine 157 and asparagine 183 are each glycosylated (N-linked (GlcNAc...) asparagine). The disordered stretch occupies residues 174–210 (LAENTQGSGNSSGHAHGSSGSGSASASKTDSKSSAAS). Positions 180-210 (GSGNSSGHAHGSSGSGSASASKTDSKSSAAS) are enriched in low complexity. Asparagine 238 is lipidated: GPI-anchor amidated asparagine. A propeptide spans 239 to 261 (SGSLAYVNGALAIGGVVAAALLI) (removed in mature form).

It belongs to the X325 family. It depends on Cu(2+) as a cofactor.

The protein resides in the cell membrane. Lytic polysaccharide monooxygenase-like protein that has diverged to biological functions other than polysaccharide degradation since it does not perform oxidative cleavage of polysaccharides. Acts as a cell surface-bound protein that functions in the copper-accumulation pathway. In Yarrowia lipolytica (strain CLIB 122 / E 150) (Yeast), this protein is Lytic polysaccharide monooxygenase-like protein X325.